A 72-amino-acid polypeptide reads, in one-letter code: Small, acid-soluble spore protein 1 (72 aa).

The protein belongs to the alpha/beta-type SASP family.

In terms of biological role, SASP are bound to spore DNA. They are double-stranded DNA-binding proteins that cause DNA to change to an a-like conformation. They protect the DNA backbone from chemical and enzymatic cleavage and are thus involved in dormant spore's high resistance to UV light. This is Small, acid-soluble spore protein 1 (Sh-1) from Halobacillus halophilus (strain ATCC 35676 / DSM 2266 / JCM 20832 / KCTC 3685 / LMG 17431 / NBRC 102448 / NCIMB 2269) (Sporosarcina halophila).